The primary structure comprises 346 residues: Selenide, water dikinase (346 aa).

Cys15 is an active-site residue. ATP contacts are provided by residues Lys18 and Ser46–Asp48. Asp49 provides a ligand contact to Mg(2+). Residues Asp66, Asp89, and Gly137–Ser139 contribute to the ATP site. Asp89 lines the Mg(2+) pocket. Asp225 is a binding site for Mg(2+).

The protein belongs to the selenophosphate synthase 1 family. Class I subfamily. In terms of assembly, homodimer. It depends on Mg(2+) as a cofactor.

The catalysed reaction is hydrogenselenide + ATP + H2O = selenophosphate + AMP + phosphate + 2 H(+). In terms of biological role, synthesizes selenophosphate from selenide and ATP. The sequence is that of Selenide, water dikinase from Photobacterium profundum (strain SS9).